The sequence spans 343 residues: Anthranilate phosphoribosyltransferase (343 aa).

Residues glycine 84, 87 to 88, threonine 92, 94 to 97, 112 to 120, and serine 124 contribute to the 5-phospho-alpha-D-ribose 1-diphosphate site; these read GD, NIST, and KHGNRGVSS. Glycine 84 serves as a coordination point for anthranilate. Serine 96 contributes to the Mg(2+) binding site. Position 115 (asparagine 115) interacts with anthranilate. Arginine 170 contacts anthranilate. Residues aspartate 229 and glutamate 230 each contribute to the Mg(2+) site.

Belongs to the anthranilate phosphoribosyltransferase family. As to quaternary structure, homodimer. The cofactor is Mg(2+).

It catalyses the reaction N-(5-phospho-beta-D-ribosyl)anthranilate + diphosphate = 5-phospho-alpha-D-ribose 1-diphosphate + anthranilate. It functions in the pathway amino-acid biosynthesis; L-tryptophan biosynthesis; L-tryptophan from chorismate: step 2/5. Its function is as follows. Catalyzes the transfer of the phosphoribosyl group of 5-phosphorylribose-1-pyrophosphate (PRPP) to anthranilate to yield N-(5'-phosphoribosyl)-anthranilate (PRA). The protein is Anthranilate phosphoribosyltransferase of Burkholderia pseudomallei (strain 1106a).